The following is a 205-amino-acid chain: Leucyl/phenylalanyl-tRNA--protein transferase (205 aa).

Belongs to the L/F-transferase family.

It localises to the cytoplasm. The enzyme catalyses N-terminal L-lysyl-[protein] + L-leucyl-tRNA(Leu) = N-terminal L-leucyl-L-lysyl-[protein] + tRNA(Leu) + H(+). It carries out the reaction N-terminal L-arginyl-[protein] + L-leucyl-tRNA(Leu) = N-terminal L-leucyl-L-arginyl-[protein] + tRNA(Leu) + H(+). It catalyses the reaction L-phenylalanyl-tRNA(Phe) + an N-terminal L-alpha-aminoacyl-[protein] = an N-terminal L-phenylalanyl-L-alpha-aminoacyl-[protein] + tRNA(Phe). Its function is as follows. Functions in the N-end rule pathway of protein degradation where it conjugates Leu, Phe and, less efficiently, Met from aminoacyl-tRNAs to the N-termini of proteins containing an N-terminal arginine or lysine. The chain is Leucyl/phenylalanyl-tRNA--protein transferase from Mesorhizobium japonicum (strain LMG 29417 / CECT 9101 / MAFF 303099) (Mesorhizobium loti (strain MAFF 303099)).